The sequence spans 232 residues: Peptidyl-prolyl cis-trans isomerase CYP26-1 (232 aa).

The 160-residue stretch at 7-166 (FFDLTVDGKP…KPVVIADCGE (160 aa)) folds into the PPIase cyclophilin-type domain. Asn-108 is a glycosylation site (N-linked (GlcNAc...) asparagine). Residues 212–232 (YYLINIVVACMVLMCFWSWFV) traverse the membrane as a helical segment.

The protein belongs to the cyclophilin-type PPIase family. In terms of tissue distribution, expressed only in flowers.

The protein resides in the membrane. It catalyses the reaction [protein]-peptidylproline (omega=180) = [protein]-peptidylproline (omega=0). PPIases accelerate the folding of proteins. It catalyzes the cis-trans isomerization of proline imidic peptide bonds in oligopeptides. The sequence is that of Peptidyl-prolyl cis-trans isomerase CYP26-1 (CYP26-1) from Arabidopsis thaliana (Mouse-ear cress).